The sequence spans 1513 residues: DNA polymerase alpha catalytic subunit (1513 aa).

Positions 235–254 (STNQNANASDSKRVSNQTND) are disordered. Positions 1344, 1347, 1370, 1373, 1404, 1409, 1422, and 1427 each coordinate Zn(2+). A CysA-type zinc finger spans residues 1344-1373 (CPHCSESYHFPGIFQDGKNNTLSGLLCIKC). The CysB motif signature appears at 1404 to 1427 (CQEPACGAVSRQLLYNNKCINLAC).

This sequence belongs to the DNA polymerase type-B family.

The protein localises to the nucleus. The catalysed reaction is DNA(n) + a 2'-deoxyribonucleoside 5'-triphosphate = DNA(n+1) + diphosphate. In terms of biological role, polymerase alpha in a complex with DNA primase is a replicative polymerase. This is DNA polymerase alpha catalytic subunit from Oxytricha trifallax (Sterkiella histriomuscorum).